The chain runs to 927 residues: Roc-COR-CHAT protease (927 aa).

LRR repeat units lie at residues 38–61 (AGQVTALSIGNSSLKKLVLGTEAQ), 83–107 (LPHLTHLYLNNCAIKDITIPKGFRS), 109–125 (QQVYLQKNGLTELVFEG), and 127–151 (CPALVLLDVSENQLKGLSFHSGFRA). The interval 152–170 (LKYIYATNNVLQKITFNRS) is LRR 5. LRR repeat units lie at residues 171 to 194 (MRLLNTLHLAKNQLTELAPFLSEI) and 195 to 217 (ETMETLYLQGNQLLRIDREIWDR). The COR domain occupies 436–623 (EWLGVKEDLN…ELRWKKGVVL (188 aa)). Active-site residues include histidine 796 and cysteine 840.

Its function is as follows. A dedicated protease for gasdermin bGSDM; cleaves the bGSDM precursor, releasing the pore-forming moiety, which integrates into the membrane and triggers cell death. Probably involved in defense against bacteriophages. Expression of bGSDM and this neighboring protease is highly toxic in E.coli. Cells expressing the gene pair stop dividing and lose membrane integrity. Both proteins are required to kill E.coli. The bGSDM recognition site is larger than the 8 residues surrounding the cleavage site; replacement of the endogenous recognition site by the Runella site (NRVLGENM) in a number of other bGSDMs is not sufficient for them to be cleaved. The chain is Roc-COR-CHAT protease from Runella zeae (strain ATCC BAA-293 / DSM 19591 / LMG 21438 / NS12).